A 257-amino-acid polypeptide reads, in one-letter code: AN1-type zinc finger protein 2B (257 aa).

2 AN1-type zinc fingers span residues 4 to 52 and 94 to 142; these read PDLG…QKDI and KIFT…HQTS. Zn(2+) is bound by residues C10, C15, C25, C28, C33, H36, H42, C44, C100, C105, C115, C118, C123, H126, H132, and C134. A VCP/p97-interacting motif (VIM) region spans residues 141 to 151; it reads TSRAGLAAISR. The tract at residues 152–184 is disordered; sequence AQGLASTSTAPSPSRTLPSSSSPSRATPQLPTR. Residues 155-179 show a composition bias toward low complexity; it reads LASTSTAPSPSRTLPSSSSPSRATP. Residues S163, S173, and S187 each carry the phosphoserine; by MAPK14 modification. UIM domains follow at residues 197–216 and 221–240; these read SEDE…AKPQ and QEED…AEYQ. The residue at position 254 (C254) is a Cysteine methyl ester. A lipid anchor (S-geranylgeranyl cysteine) is attached at C254. The CAAX motif motif lies at 254–257; it reads CSLC. A propeptide spans 255-257 (removed in mature form); that stretch reads SLC.

As to quaternary structure, binds 'Lys-48'-linked polyubiquitin chains of ubiquitinated proteins. Associates with the proteasome complex; upon exposure to arsenite. Interacts (via VIM motif) with VCP; the interaction is direct. Interacts with BAG6. Interacts with IGF1R (nascent precursor form). Interacts with DERL1, FAF2, NPLOC4 and UFD1; probably through VCP. Post-translationally, phosphorylated by MAPK14. Phosphorylation has no effect on association with the proteasome complex.

The protein localises to the endoplasmic reticulum membrane. Functionally, plays a role in protein homeostasis by regulating both the translocation and the ubiquitin-mediated proteasomal degradation of nascent proteins at the endoplasmic reticulum. It is involved in the regulation of signal-mediated translocation of proteins into the endoplasmic reticulum. It also plays a role in the ubiquitin-mediated proteasomal degradation of proteins for which signal-mediated translocation to the endoplasmic reticulum has failed. May therefore function in the endoplasmic reticulum stress-induced pre-emptive quality control, a mechanism that selectively attenuates the translocation of newly synthesized proteins into the endoplasmic reticulum and reroutes them to the cytosol for proteasomal degradation. By controlling the steady-state expression of the IGF1R receptor, indirectly regulates the insulin-like growth factor receptor signaling pathway. The protein is AN1-type zinc finger protein 2B of Mus musculus (Mouse).